Reading from the N-terminus, the 835-residue chain is Cap-specific mRNA (nucleoside-2'-O-)-methyltransferase 1 (835 aa).

Residues 1–66 form a disordered region; sequence MKRRNDSECT…TEGKQRSSDS (66 aa). A Bipartite nuclear localization signal motif is present at residues 2–19; the sequence is KRRNDSECTAPLKKQKKR. 5 positions are modified to phosphoserine: Ser28, Ser31, Ser53, Ser66, and Ser91. The span at 57–66 shows a compositional bias: basic and acidic residues; the sequence is TEGKQRSSDS. Residues 87–133 form the G-patch domain; that stretch reads YNSVSQKLMAKMGFKEGEGLGKYSQGRKDIVEASNQKGRRGLGLTLQ. Residue Lys108 is modified to N6-acetyllysine. Substrate-binding positions include 203–207 and Arg218; that span reads KSVFD. The region spanning 231-450 is the RrmJ-type SAM-dependent 2'-O-MTase domain; it reads FFLNRAAMKM…ERYVVCKGLK (220 aa). Asn234 provides a ligand contact to S-adenosyl-L-methionine. Residue Lys239 is part of the active site. S-adenosyl-L-methionine is bound by residues 277–283 and 335–336; these read CAGPGGF and DI. Asp364 is a catalytic residue. 374 to 376 serves as a coordination point for substrate; that stretch reads NLQ. Lys404 (proton acceptor) is an active-site residue. Position 439 (Asn439) interacts with substrate. The interval 727-835 is interaction with POLR2A; it reads SSGTPKLSYT…VLSFIQTHSA (109 aa). The WW domain occupies 752-786; that stretch reads RTVNEPWTMGFSKSFKRKFFYNKKTKNSTFDLPAD.

As to quaternary structure, interacts with POLR2A (via C-terminus).

The protein localises to the nucleus. It carries out the reaction a 5'-end (N(7)-methyl 5'-triphosphoguanosine)-ribonucleoside in mRNA + S-adenosyl-L-methionine = a 5'-end (N(7)-methyl 5'-triphosphoguanosine)-(2'-O-methyl-ribonucleoside) in mRNA + S-adenosyl-L-homocysteine + H(+). Its function is as follows. S-adenosyl-L-methionine-dependent methyltransferase that mediates mRNA cap1 2'-O-ribose methylation to the 5'-cap structure of mRNAs. Methylates the ribose of the first nucleotide of a m(7)GpppG-capped mRNA and small nuclear RNA (snRNA) to produce m(7)GpppRm (cap1). Displays a preference for cap0 transcripts. Cap1 modification is linked to higher levels of translation. May be involved in the interferon response pathway. This chain is Cap-specific mRNA (nucleoside-2'-O-)-methyltransferase 1 (CMTR1), found in Bos taurus (Bovine).